The chain runs to 60 residues: Large ribosomal subunit protein uL30 (60 aa).

This sequence belongs to the universal ribosomal protein uL30 family. In terms of assembly, part of the 50S ribosomal subunit.

The sequence is that of Large ribosomal subunit protein uL30 from Bacillus anthracis (strain A0248).